A 464-amino-acid chain; its full sequence is Tryprostatin B synthase (464 aa).

Residues methionine 94 and glutamate 102 each contribute to the brevianamide F site. Residues arginine 113, lysine 201, and tyrosine 203 each coordinate dimethylallyl diphosphate. Tyrosine 205 is a brevianamide F binding site. Dimethylallyl diphosphate-binding residues include lysine 294, tyrosine 296, glutamine 380, tyrosine 382, tyrosine 446, and tyrosine 450.

It belongs to the tryptophan dimethylallyltransferase family.

It carries out the reaction brevianamide F + dimethylallyl diphosphate = tryprostatin B + diphosphate. It functions in the pathway mycotoxin biosynthesis. In terms of biological role, brevianamide F prenyltransferase; part of the gene cluster that mediates the biosynthesis of fumitremorgins, indole alkaloids that carry not only intriguing chemical structures, but also interesting biological and pharmacological activities. The biosynthesis of fumitremorgin-type alkaloids begins by condensation of the two amino acids L-tryptophan and L-proline to brevianamide F, catalyzed by the non-ribosomal peptide synthetase ftmA. Brevianamide F is then prenylated by the prenyltransferase ftmPT1/ftmB in the presence of dimethylallyl diphosphate, resulting in the formation of tryprostatin B. The three cytochrome P450 monooxygenases, ftmP450-1/ftmC, ftmP450-2/ftmE and ftmP450-3/FtmG, are responsible for the conversion of tryprostatin B to 6-hydroxytryprostatin B, tryprostatin A to fumitremorgin C and fumitremorgin C to 12,13-dihydroxyfumitremorgin C, respectively. The putative methyltransferase ftmMT/ftmD is expected for the conversion of 6-hydroxytryprostatin B to tryprostatin A. FtmPT2/FtmH catalyzes the prenylation of 12,13-dihydroxyfumitre-morgin C in the presence of dimethylallyl diphosphate, resulting in the formation of fumitremorgin B. Fumitremorgin B is further converted to verruculogen by ftmOx1/ftmF via the insertion of an endoperoxide bond between the two prenyl moieties. In some fungal species, verruculogen is further converted to fumitremorgin A, but the enzymes involved in this step have not been identified yet. The polypeptide is Tryprostatin B synthase (Aspergillus fumigatus (Neosartorya fumigata)).